The chain runs to 199 residues: Small ribosomal subunit protein uS2 (199 aa).

It belongs to the universal ribosomal protein uS2 family.

This Thermoplasma acidophilum (strain ATCC 25905 / DSM 1728 / JCM 9062 / NBRC 15155 / AMRC-C165) protein is Small ribosomal subunit protein uS2 (rps2).